The sequence spans 326 residues: N-acetyl-gamma-glutamyl-phosphate reductase (326 aa).

The active site involves C155.

The protein belongs to the NAGSA dehydrogenase family. Type 1 subfamily.

The protein resides in the cytoplasm. It catalyses the reaction N-acetyl-L-glutamate 5-semialdehyde + phosphate + NADP(+) = N-acetyl-L-glutamyl 5-phosphate + NADPH + H(+). It participates in amino-acid biosynthesis; L-arginine biosynthesis; N(2)-acetyl-L-ornithine from L-glutamate: step 3/4. Functionally, catalyzes the NADPH-dependent reduction of N-acetyl-5-glutamyl phosphate to yield N-acetyl-L-glutamate 5-semialdehyde. The chain is N-acetyl-gamma-glutamyl-phosphate reductase from Shewanella sp. (strain MR-4).